Here is a 373-residue protein sequence, read N- to C-terminus: Glutamine synthetase (373 aa).

A2 is subject to N-acetylalanine. Residues 2–25 are required for glutamine-induced ubiquitination by CRL4(CRBN) and proteasomal degradation; the sequence is ATSASSHLNKGIKQMYMSLPQGEK. 2 positions are modified to N6-acetyllysine: K11 and K14. The GS beta-grasp domain occupies 24–106; sequence EKVQAMYIWV…VLCEVFKYNR (83 aa). Residue Y104 is modified to Phosphotyrosine. A GS catalytic domain is found at 113-373; the sequence is LRHICKRIMD…TGDEPFQYKN (261 aa). E134 serves as a coordination point for ATP. Residues E134, E136, E196, and E203 each contribute to the Mn(2+) site. 203 to 208 serves as a coordination point for ATP; that stretch reads EFQIGP. 246–247 lines the L-glutamate pocket; it reads NW. H253 provides a ligand contact to Mn(2+). ATP contacts are provided by residues 255 to 257, R319, and R324; that span reads NFS. R319 contacts L-glutamate. 336-338 is an ADP binding site; it reads YFE. A Mn(2+)-binding site is contributed by E338. R340 is an L-glutamate binding site. Phosphoserine is present on S343.

Belongs to the glutamine synthetase family. In terms of assembly, decamer; composed of two pentamers. Interacts with PALMD. Interacts with RHOJ. Interacts with BEST2; this interaction tethers a fraction of GLUL to the membrane, causing a decrease of cytosolic glutamine synthase (GS) activity and inhibits the chloride channel activity of BEST2 by affecting the gating at the aperture in the absence of intracellular glutamate. It depends on Mg(2+) as a cofactor. Requires Mn(2+) as cofactor. In terms of processing, acetylated by EP300/p300; acetylation is stimulated by increased glutamine levels and promotes ubiquitin-mediated proteasomal degradation. Palmitoylated; undergoes autopalmitoylation. Post-translationally, ubiquitinated by ZNRF1. Ubiquitinated by the DCX (DDB1-CUL4-X-box) E3 ubiquitin-protein ligase complex called CRL4(CRBN), leading to proteasomal degradation. As to expression, expressed in microvascular endothelial cells.

The protein resides in the cytoplasm. The protein localises to the cytosol. Its subcellular location is the microsome. It localises to the mitochondrion. It is found in the cell membrane. The enzyme catalyses L-glutamate + NH4(+) + ATP = L-glutamine + ADP + phosphate + H(+). The catalysed reaction is L-cysteinyl-[protein] + hexadecanoyl-CoA = S-hexadecanoyl-L-cysteinyl-[protein] + CoA. With respect to regulation, glutamine synthetase activity is inhibited by methionine sulfoximine (MSO). In terms of biological role, glutamine synthetase that catalyzes the ATP-dependent conversion of glutamate and ammonia to glutamine. Its role depends on tissue localization: in the brain, it regulates the levels of toxic ammonia and converts neurotoxic glutamate to harmless glutamine, whereas in the liver, it is one of the enzymes responsible for the removal of ammonia. Plays a key role in ammonium detoxification during erythropoiesis: the glutamine synthetase activity is required to remove ammonium generated by porphobilinogen deaminase (HMBS) during heme biosynthesis to prevent ammonium accumulation and oxidative stress. Essential for proliferation of fetal skin fibroblasts. Independently of its glutamine synthetase activity, required for endothelial cell migration during vascular development. Involved in angiogenesis by regulating membrane localization and activation of the GTPase RHOJ, possibly by promoting RHOJ palmitoylation. May act as a palmitoyltransferase for RHOJ: able to autopalmitoylate and then transfer the palmitoyl group to RHOJ. Plays a role in ribosomal 40S subunit biogenesis. Through the interaction with BEST2, inhibits BEST2 channel activity by affecting the gating at the aperture in the absence of intracellular L-glutamate, but sensitizes BEST2 to intracellular L-glutamate, which promotes the opening of BEST2 and thus relieves its inhibitory effect on BEST2. This Mus musculus (Mouse) protein is Glutamine synthetase.